The sequence spans 411 residues: [Pyruvate dehydrogenase (acetyl-transferring)] kinase isozyme 4, mitochondrial (411 aa).

Residues 138–368 (IIEYKDACTV…DAIIYLKALS (231 aa)) enclose the Histidine kinase domain. ATP is bound by residues 254–261 (ELFKNAMR), aspartate 293, 312–313 (ST), and 329–334 (GFGYGL).

It belongs to the PDK/BCKDK protein kinase family. Homodimer. Interacts with the pyruvate dehydrogenase complex subunit DLAT, and is part of the multimeric pyruvate dehydrogenase complex that contains multiple copies of pyruvate dehydrogenase (E1), dihydrolipoamide acetyltransferase (DLAT, E2) and lipoamide dehydrogenase (DLD, E3). Ubiquitous; highest levels of expression in heart and skeletal muscle.

The protein localises to the mitochondrion matrix. The catalysed reaction is L-seryl-[pyruvate dehydrogenase E1 alpha subunit] + ATP = O-phospho-L-seryl-[pyruvate dehydrogenase E1 alpha subunit] + ADP + H(+). Kinase that plays a key role in regulation of glucose and fatty acid metabolism and homeostasis via phosphorylation of the pyruvate dehydrogenase subunits PDHA1 and PDHA2. This inhibits pyruvate dehydrogenase activity, and thereby regulates metabolite flux through the tricarboxylic acid cycle, down-regulates aerobic respiration and inhibits the formation of acetyl-coenzyme A from pyruvate. Inhibition of pyruvate dehydrogenase decreases glucose utilization and increases fat metabolism in response to prolonged fasting and starvation. Plays an important role in maintaining normal blood glucose levels under starvation, and is involved in the insulin signaling cascade. Via its regulation of pyruvate dehydrogenase activity, plays an important role in maintaining normal blood pH and in preventing the accumulation of ketone bodies under starvation. In the fed state, mediates cellular responses to glucose levels and to a high-fat diet. Regulates both fatty acid oxidation and de novo fatty acid biosynthesis. Plays a role in the generation of reactive oxygen species. Protects detached epithelial cells against anoikis. Plays a role in cell proliferation via its role in regulating carbohydrate and fatty acid metabolism. This chain is [Pyruvate dehydrogenase (acetyl-transferring)] kinase isozyme 4, mitochondrial (PDK4), found in Homo sapiens (Human).